The chain runs to 350 residues: Peptide-N(4)-(N-acetyl-beta-glucosaminyl)asparagine amidase (350 aa).

Zn(2+)-binding residues include cysteine 123, cysteine 126, cysteine 157, and cysteine 160. Residue cysteine 183 is the Nucleophile of the active site. Active-site residues include histidine 210 and aspartate 227. Glutamate 230 is a binding site for substrate. The tract at residues 324–350 is disordered; sequence EIPPAAGAAGRQSGSADWKRQRGEDGR. Residues 340–350 show a composition bias toward basic and acidic residues; the sequence is DWKRQRGEDGR.

It belongs to the transglutaminase-like superfamily. PNGase family. Zn(2+) serves as cofactor.

It is found in the cytoplasm. The enzyme catalyses Hydrolysis of an N(4)-(acetyl-beta-D-glucosaminyl)asparagine residue in which the glucosamine residue may be further glycosylated, to yield a (substituted) N-acetyl-beta-D-glucosaminylamine and a peptide containing an aspartate residue.. In terms of biological role, specifically deglycosylates the denatured form of N-linked glycoproteins in the cytoplasm and assists their proteasome-mediated degradation. Cleaves the beta-aspartyl-glucosamine (GlcNAc) of the glycan and the amide side chain of Asn, converting Asn to Asp. Prefers proteins containing high-mannose over those bearing complex type oligosaccharides. Can recognize misfolded proteins in the endoplasmic reticulum that are exported to the cytosol to be destroyed and deglycosylate them, while it has no activity toward native proteins. Deglycosylation is a prerequisite for subsequent proteasome-mediated degradation of some, but not all, misfolded glycoproteins. This is Peptide-N(4)-(N-acetyl-beta-glucosaminyl)asparagine amidase (PNG1) from Eremothecium gossypii (strain ATCC 10895 / CBS 109.51 / FGSC 9923 / NRRL Y-1056) (Yeast).